Consider the following 648-residue polypeptide: Acetyl-coenzyme A synthetase (648 aa).

Residues 191–194, threonine 310, and asparagine 334 each bind CoA; that span reads RGGR. ATP-binding positions include 386–388, 410–415, aspartate 499, and arginine 514; these read GEP and DTWWQT. Position 522 (serine 522) interacts with CoA. Arginine 525 contacts ATP. Mg(2+) contacts are provided by valine 536, histidine 538, and isoleucine 541. Residue arginine 583 participates in CoA binding. Lysine 608 carries the post-translational modification N6-acetyllysine.

It belongs to the ATP-dependent AMP-binding enzyme family. Mg(2+) is required as a cofactor. Acetylated. Deacetylation by the SIR2-homolog deacetylase activates the enzyme.

The enzyme catalyses acetate + ATP + CoA = acetyl-CoA + AMP + diphosphate. Its function is as follows. Catalyzes the conversion of acetate into acetyl-CoA (AcCoA), an essential intermediate at the junction of anabolic and catabolic pathways. AcsA undergoes a two-step reaction. In the first half reaction, AcsA combines acetate with ATP to form acetyl-adenylate (AcAMP) intermediate. In the second half reaction, it can then transfer the acetyl group from AcAMP to the sulfhydryl group of CoA, forming the product AcCoA. In Aeromonas salmonicida (strain A449), this protein is Acetyl-coenzyme A synthetase.